The following is a 272-amino-acid chain: MASSSSNRQFSHRNVNTFLTYPHCPENPEIVCQMIWELVGRWTPKYIICAQEAHKDGDMHLHALLQTEKPVRITDSRFFDIEGFHPNIQSAKSVNKVRDYILKEPLAVFERGTFIPRKSSFQGNPSKGNSEKKPSKDEIMREIISHSTSKLEYLSMIRKEFPYDWATKLQYFEYSANKLFPEIQEEFISPHPPSSPDLLCNESIKDWLQPNIFQVSPESYMLLQPTCYTLEDAISDLEWMDKLSSQQMKEQESRASTSSVQQELGNLLGPEA.

The CRESS-DNA virus Rep endonuclease domain occupies 11–114; that stretch reads SHRNVNTFLT…PLAVFERGTF (104 aa). Positions 18–21 match the RCR-1 motif; sequence FLTY. Glu-52, His-60, and His-62 together coordinate a divalent metal cation. The RCR-2 motif lies at 60–62; that stretch reads HLH. The active-site For DNA cleavage activity is Tyr-100. An RCR-3 motif is present at residues 100-103; that stretch reads YILK. Glu-104 is a binding site for a divalent metal cation. The span at 119–128 shows a compositional bias: polar residues; the sequence is SSFQGNPSKG. A disordered region spans residues 119–138; the sequence is SSFQGNPSKGNSEKKPSKDE. Residues 129–138 are compositionally biased toward basic and acidic residues; the sequence is NSEKKPSKDE. Residues 175–187 form an oligomerization region; it reads SANKLFPEIQEEF. The LXCXE motif, interaction with host RBR1 motif lies at 198 to 202; the sequence is LLCNE. The segment at 221–230 is transactivation; the sequence is MLLQPTCYTL. Over residues 245–264 the composition is skewed to polar residues; the sequence is SQQMKEQESRASTSSVQQEL. The segment at 245–272 is disordered; that stretch reads SQQMKEQESRASTSSVQQELGNLLGPEA.

This sequence belongs to the geminiviridae Rep protein family. In terms of assembly, homooligomer. Interacts (via LXCXE domain) with host retinoblastoma-related protein 1 (RBR1), and may thereby deregulate the host cell cycle. Part of the C- and V-complexes which are RepA-Rep-DNA complexes involved in the c-sense and v-sense transcription. Mg(2+) serves as cofactor. The cofactor is Mn(2+).

It localises to the host nucleus. Its subcellular location is the host cytoplasm. Functionally, implicated in enhancement of V-sense gene expression. Acts a an inhibitor of C-sense gene transcription. The chain is Replication-associated protein A from Avena sativa (Oat).